We begin with the raw amino-acid sequence, 1189 residues long: Phosphinothricin tripeptide synthetase PhsB (1189 aa).

One can recognise a Carrier 1 domain in the interval 5 to 80 (QTDDVVTGRI…ALAKRIRASR (76 aa)). Residue S40 is modified to O-(pantetheine 4'-phosphoryl)serine. Disordered regions lie at residues 75–97 (RIRA…PVDS) and 454–476 (TPDR…GGDT). Residues 100–541 (TAPLTFQQEP…VALLPLQEPA (442 aa)) form a condensation region. The span at 455 to 472 (PDRDGREPGEGPFAREES) shows a compositional bias: basic and acidic residues. Positions 572-969 (AQAHRTPDAV…GREDGQVKLR (398 aa)) are adenylation. The interval 1045–1081 (DRVPLTPSGKTDRKALPDPAAGEQPRSGRGAAPGTPA) is disordered. The Carrier 2 domain occupies 1076–1151 (APGTPAEREL…DFALAVVTAQ (76 aa)). At S1111 the chain carries O-(pantetheine 4'-phosphoryl)serine.

Belongs to the NRP synthetase family. Requires pantetheine 4'-phosphate as cofactor.

It carries out the reaction holo-[peptidyl-carrier protein] + L-alanine + ATP = L-alanyl-[peptidyl-carrier protein] + AMP + diphosphate. It functions in the pathway secondary metabolite biosynthesis; bialaphos biosynthesis. Involved in the biosynthesis of phosphinothricin tripeptide (PTT), also known as bialaphos (BA), a natural-product antibiotic and potent herbicide. Adenylates L-alanine and loads it onto a peptidyl carrier domain via a thioester linkage to the phosphopanthetheine moiety. Shows weaker activity with aminobutyric acid and L-serine. This Streptomyces viridochromogenes (strain DSM 40736 / JCM 4977 / BCRC 1201 / Tue 494) protein is Phosphinothricin tripeptide synthetase PhsB.